Consider the following 279-residue polypeptide: Undecaprenyl-diphosphatase (279 aa).

Helical transmembrane passes span 1 to 21 (MVLE…LPIS), 39 to 59 (GRFF…LYFF), 96 to 116 (LLLV…VRFV), 128 to 148 (FTMG…DALF), 155 to 175 (IFQI…FAII), 201 to 221 (FSFL…LVAG), 231 to 251 (YSLI…SALL), and 259 to 279 (FVLF…VSFF).

The protein belongs to the UppP family.

Its subcellular location is the cell membrane. The catalysed reaction is di-trans,octa-cis-undecaprenyl diphosphate + H2O = di-trans,octa-cis-undecaprenyl phosphate + phosphate + H(+). Catalyzes the dephosphorylation of undecaprenyl diphosphate (UPP). Confers resistance to bacitracin. This chain is Undecaprenyl-diphosphatase, found in Tropheryma whipplei (strain TW08/27) (Whipple's bacillus).